A 616-amino-acid polypeptide reads, in one-letter code: Protein RIK (616 aa).

The segment covering 1-11 (MTEDRAHKVAD) has biased composition (basic and acidic residues). The disordered stretch occupies residues 1-32 (MTEDRAHKVADEPAASGRQSPERKKRKWDQPA). In terms of domain architecture, KH spans 198–304 (GTTSESISVP…AKVLAENLLD (107 aa)). Composition is skewed to polar residues over residues 432-449 (TQAV…TKGN), 475-484 (TESQNSQQGS), and 491-502 (LDSSGNIGSSSI). 2 disordered regions span residues 432–455 (TQAV…LDAE) and 467–616 (LPVS…HTCV). A compositionally biased stretch (pro residues) spans 534–564 (LPPPLKSMLPLPPRSMPPPPPKSMPPPPPKF). Basic and acidic residues-rich tracts occupy residues 565–575 (PSDEFLSRNEN) and 598–610 (SERR…EEKN).

In terms of assembly, interacts with RS2. As to expression, expressed in vegetative tissues. More abundant in apices and young leaf primordia than in fully expanded leaf tissues.

It localises to the nucleus. The polypeptide is Protein RIK (Zea mays (Maize)).